The following is a 229-amino-acid chain: MAGHDSGNAKRGRSPSFGVFVRKPVERAPAKGASDGAVDSQAIRIDAAQSWPDDAVEVGAVVDAYGLKGWVKLAAHAGAGRGGDALLKARDWWLQKGAERKFARVTQAKLHGDTVVAHPGGSVDRDTALALRGARVFVRRGDFPALAADEFYWVDLIGLDVVNEAGVALGKIADMIDNGVHSIMRVEYPATGKDGRPKTGERLIPFVGVYVKAVEQAAGRVVVDWEADY.

Positions 1 to 21 (MAGHDSGNAKRGRSPSFGVFV) are disordered. The PRC barrel domain maps to 148-229 (ADEFYWVDLI…RVVVDWEADY (82 aa)).

Belongs to the RimM family. Binds ribosomal protein uS19.

The protein resides in the cytoplasm. Its function is as follows. An accessory protein needed during the final step in the assembly of 30S ribosomal subunit, possibly for assembly of the head region. Essential for efficient processing of 16S rRNA. May be needed both before and after RbfA during the maturation of 16S rRNA. It has affinity for free ribosomal 30S subunits but not for 70S ribosomes. The protein is Ribosome maturation factor RimM of Burkholderia pseudomallei (strain 1106a).